A 547-amino-acid chain; its full sequence is T-complex protein 1 subunit gamma (547 aa).

Gly-41 is an ADP binding site. An ATP-binding site is contributed by Gly-41. Mg(2+) is bound at residue Asp-92. ADP contacts are provided by Gly-93, Thr-94, Thr-95, Ser-96, Thr-161, and Lys-162. Residues Gly-93, Thr-94, and Thr-95 each contribute to the ATP site. Cys-365 and Cys-371 are oxidised to a cystine. ADP contacts are provided by Gly-410, Gly-481, Glu-482, Glu-496, and Lys-501. ATP-binding residues include Gly-410 and Gly-481. Glu-496 provides a ligand contact to ATP. Over residues 525–534 (HKKKGEDHGR) the composition is skewed to basic and acidic residues. The tract at residues 525–547 (HKKKGEDHGRQPAAAPEAPQQAE) is disordered. Residues 535-547 (QPAAAPEAPQQAE) show a composition bias toward low complexity.

Belongs to the TCP-1 chaperonin family. As to quaternary structure, component of the chaperonin-containing T-complex (TRiC), a hexadecamer composed of two identical back-to-back stacked rings enclosing a protein folding chamber. Each ring is made up of eight different subunits: TCP1/CCT1, CCT2, CCT3, CCT4, CCT5, CCT6A/CCT6, CCT7, CCT8.

The protein localises to the cytoplasm. The catalysed reaction is ATP + H2O = ADP + phosphate + H(+). In terms of biological role, component of the chaperonin-containing T-complex (TRiC), a molecular chaperone complex that assists the folding of actin, tubulin and other proteins upon ATP hydrolysis. This is T-complex protein 1 subunit gamma (cct3) from Xenopus laevis (African clawed frog).